The sequence spans 581 residues: Proline--tRNA ligase (581 aa).

Belongs to the class-II aminoacyl-tRNA synthetase family. ProS type 1 subfamily. As to quaternary structure, homodimer.

Its subcellular location is the cytoplasm. It carries out the reaction tRNA(Pro) + L-proline + ATP = L-prolyl-tRNA(Pro) + AMP + diphosphate. Functionally, catalyzes the attachment of proline to tRNA(Pro) in a two-step reaction: proline is first activated by ATP to form Pro-AMP and then transferred to the acceptor end of tRNA(Pro). As ProRS can inadvertently accommodate and process non-cognate amino acids such as alanine and cysteine, to avoid such errors it has two additional distinct editing activities against alanine. One activity is designated as 'pretransfer' editing and involves the tRNA(Pro)-independent hydrolysis of activated Ala-AMP. The other activity is designated 'posttransfer' editing and involves deacylation of mischarged Ala-tRNA(Pro). The misacylated Cys-tRNA(Pro) is not edited by ProRS. The polypeptide is Proline--tRNA ligase (Rhodococcus opacus (strain B4)).